A 326-amino-acid polypeptide reads, in one-letter code: Aspartate carbamoyltransferase catalytic subunit (326 aa).

Carbamoyl phosphate-binding residues include R76 and T77. K104 is an L-aspartate binding site. Positions 126, 156, and 159 each coordinate carbamoyl phosphate. Residues R189 and R244 each coordinate L-aspartate. Residues G285 and P286 each coordinate carbamoyl phosphate.

It belongs to the aspartate/ornithine carbamoyltransferase superfamily. ATCase family. In terms of assembly, heterododecamer (2C3:3R2) of six catalytic PyrB chains organized as two trimers (C3), and six regulatory PyrI chains organized as three dimers (R2).

The enzyme catalyses carbamoyl phosphate + L-aspartate = N-carbamoyl-L-aspartate + phosphate + H(+). Its pathway is pyrimidine metabolism; UMP biosynthesis via de novo pathway; (S)-dihydroorotate from bicarbonate: step 2/3. Functionally, catalyzes the condensation of carbamoyl phosphate and aspartate to form carbamoyl aspartate and inorganic phosphate, the committed step in the de novo pyrimidine nucleotide biosynthesis pathway. This Polynucleobacter asymbioticus (strain DSM 18221 / CIP 109841 / QLW-P1DMWA-1) (Polynucleobacter necessarius subsp. asymbioticus) protein is Aspartate carbamoyltransferase catalytic subunit.